Consider the following 646-residue polypeptide: Stage V sporulation protein D (646 aa).

Catalysis depends on Ser294, which acts as the Acyl-ester intermediate. The 59-residue stretch at Asp580–Glu638 folds into the PASTA domain.

The protein belongs to the transpeptidase family.

The protein localises to the cell membrane. It carries out the reaction Preferential cleavage: (Ac)2-L-Lys-D-Ala-|-D-Ala. Also transpeptidation of peptidyl-alanyl moieties that are N-acyl substituents of D-alanine.. The protein operates within cell wall biogenesis; peptidoglycan biosynthesis. Its function is as follows. Penicillin-binding protein with an unknown catalytic activity. May have a specialized role in the morphogenesis of spore cortex, which is a modified form of peptidoglycan. Spore cortex formation is determined primarily by the mother cell. The sequence is that of Stage V sporulation protein D (spoVD) from Bacillus subtilis (strain 168).